The primary structure comprises 347 residues: NADH-ubiquinone oxidoreductase chain 2 (347 aa).

10 consecutive transmembrane segments (helical) span residues 13–33, 55–75, 96–116, 122–142, 151–171, 178–198, 199–219, 237–257, 274–294, and 326–346; these read IFTG…WLGL, AAIK…MAIL, LMIV…FWVP, VPLT…ISIM, TNIL…GGLN, ILAY…PYNP, DITI…FLIL, LTWL…LPPL, GNLI…YFYV, and LPTL…ILSI.

It belongs to the complex I subunit 2 family. Core subunit of respiratory chain NADH dehydrogenase (Complex I) which is composed of 45 different subunits. Interacts with TMEM242.

It localises to the mitochondrion inner membrane. The enzyme catalyses a ubiquinone + NADH + 5 H(+)(in) = a ubiquinol + NAD(+) + 4 H(+)(out). In terms of biological role, core subunit of the mitochondrial membrane respiratory chain NADH dehydrogenase (Complex I) which catalyzes electron transfer from NADH through the respiratory chain, using ubiquinone as an electron acceptor. Essential for the catalytic activity and assembly of complex I. The chain is NADH-ubiquinone oxidoreductase chain 2 from Pongo abelii (Sumatran orangutan).